Here is a 354-residue protein sequence, read N- to C-terminus: ORC1-type DNA replication protein 9 (354 aa).

ATP-binding positions include 63-67, Tyr195, and Arg207; that span reads TGKTC.

This sequence belongs to the CDC6/cdc18 family.

Its function is as follows. Involved in regulation of DNA replication. The chain is ORC1-type DNA replication protein 9 (orc9-1) from Halobacterium salinarum (strain ATCC 700922 / JCM 11081 / NRC-1) (Halobacterium halobium).